Consider the following 286-residue polypeptide: Probable aquaporin PIP2-5 (286 aa).

Residue methionine 1 is modified to N-acetylmethionine. Over residues 1-18 (MTKEVVGDKRSFSGKDYQ) the composition is skewed to basic and acidic residues. The tract at residues 1–23 (MTKEVVGDKRSFSGKDYQDPPPE) is disordered. Topologically, residues 1-38 (MTKEVVGDKRSFSGKDYQDPPPEPLFDATELGKWSFYR) are cytoplasmic. Lysine 3 is modified (N6,N6-dimethyllysine). Residues 39–59 (ALIAEFIATLLFLYVTIMTVI) traverse the membrane as a helical segment. Residues 60–75 (GYKSQTDPALNPDQCT) are Extracellular-facing. The helical transmembrane segment at 76–96 (GVGVLGIAWAFGGMIFILVYC) threads the bilayer. Over 97 to 124 (TAGISGGHINPAVTFGLLLARKVTLVRA) the chain is Cytoplasmic. The short motif at 106–108 (NPA) is the NPA 1 element. Residues 125–145 (VMYMVAQCLGAICGVALVKAF) traverse the membrane as a helical segment. Residues 146-165 (QSAYFTRYGGGANGLSDGYS) lie on the Extracellular side of the membrane. The helical transmembrane segment at 166–186 (IGTGVAAEIIGTFVLVYTVFS) threads the bilayer. The Cytoplasmic portion of the chain corresponds to 187–200 (ATDPKRSARDSHVP). A helical membrane pass occupies residues 201 to 221 (VLAPLPIGFAVFIVHLATIPI). Residues 222-248 (TGTGINPARSLGAAIIYNKDKAWDHHW) lie on the Extracellular side of the membrane. Positions 227–229 (NPA) match the NPA 2 motif. Residues 249 to 269 (IFWVGPFAGAAIAAFYHQFVL) form a helical membrane-spanning segment. Topologically, residues 270–286 (RAGAIKALGSFRSQPHV) are cytoplasmic. A phosphoserine mark is found at serine 279 and serine 282.

Belongs to the MIP/aquaporin (TC 1.A.8) family. PIP (TC 1.A.8.11) subfamily. As to expression, expressed in green siliques.

Its subcellular location is the cell membrane. Functionally, aquaporins facilitate the transport of water and small neutral solutes across cell membranes. In Arabidopsis thaliana (Mouse-ear cress), this protein is Probable aquaporin PIP2-5 (PIP2-5).